The chain runs to 1471 residues: Myosin-4 (1471 aa).

The region spanning 4-57 (EVGTKCWYPHKEQGWIGGEVTKNDFFEGTFHLELKLEDGETVSIETNSFENDDD) is the Myosin N-terminal SH3-like domain. The Myosin motor domain occupies 71–777 (ESTDDLTTLS…MLAFLEKLRT (707 aa)). An ATP-binding site is contributed by 165-172 (GESGAGKT). An actin-binding region spans residues 647–669 (LGELMAIINSTNVHYIRCIKPNS). 5 IQ domains span residues 781–801 (NEICIIIQKKIRARYYRLQYL), 804–824 (MESIKKCQSQIRSLLVRTRVD), 829–849 (TRAAILLQTNIRALWKREYYR), 876–898 (MLMAAVIIQSYIRSYGHKTDYRT), and 899–928 (LKRSSILVQSAMRMQLARRRYIVLQKEVEE). Residues 938–1063 (GLLEEAIEFK…LAFIENVIAQ (126 aa)) are a coiled coil. The region spanning 1164–1419 (SKVLLTVESI…LNYLANVIKR (256 aa)) is the Dilute domain.

This sequence belongs to the TRAFAC class myosin-kinesin ATPase superfamily. Myosin family. As to quaternary structure, interacts with SHE2 and SHE3.

It localises to the bud. Part of the mRNA localization machinery that restricts accumulation of certain proteins to the bud and in the daughter cell. Recruited to specific mRNAs including the ASH1 mRNA, coding for a repressor of the HO endonuclease, via its interaction with SHE3. The protein is Myosin-4 (MYO4) of Saccharomyces cerevisiae (strain ATCC 204508 / S288c) (Baker's yeast).